The primary structure comprises 338 residues: MKVFYDKDCDLSIIQGKKVAIIGYGSQGHAQACNLKDSGVDVTVGLRKGSATVAKAEAHGLKVADVATAVAAADLVMILTPDEFQGALYKNEIEPNIKKGATLAFSHGFSIHYNQVVPRADLDVIMIAPKAPGHTVRSEFVKGGGIPDLIAIYQDASGNAKNVALSYASGVGGGRTGIIETTFKDETETDLFGEQAVLCGGTVELVKAGFETLVEAGYAPEMAYFECLHELKLIVDLMYEGGIANMNYSISNNAEYGEYVTGPEVINEESRKAMRNALKRIQDGEYAKMFISEGATNYPSMTAKRRNNAAHGIEVIGEQLRSMMPWISANKIVDKTKN.

Residues 1–181 (MKVFYDKDCD…GGGRTGIIET (181 aa)) enclose the KARI N-terminal Rossmann domain. NADP(+) is bound by residues 24–27 (YGSQ), R47, S50, T52, and 82–85 (DEFQ). H107 is an active-site residue. G133 is a binding site for NADP(+). The region spanning 182–327 (TFKDETETDL…EQLRSMMPWI (146 aa)) is the KARI C-terminal knotted domain. 4 residues coordinate Mg(2+): D190, E194, E226, and E230. Residue S251 coordinates substrate.

The protein belongs to the ketol-acid reductoisomerase family. The cofactor is Mg(2+).

It catalyses the reaction (2R)-2,3-dihydroxy-3-methylbutanoate + NADP(+) = (2S)-2-acetolactate + NADPH + H(+). It carries out the reaction (2R,3R)-2,3-dihydroxy-3-methylpentanoate + NADP(+) = (S)-2-ethyl-2-hydroxy-3-oxobutanoate + NADPH + H(+). The protein operates within amino-acid biosynthesis; L-isoleucine biosynthesis; L-isoleucine from 2-oxobutanoate: step 2/4. It participates in amino-acid biosynthesis; L-valine biosynthesis; L-valine from pyruvate: step 2/4. Functionally, involved in the biosynthesis of branched-chain amino acids (BCAA). Catalyzes an alkyl-migration followed by a ketol-acid reduction of (S)-2-acetolactate (S2AL) to yield (R)-2,3-dihydroxy-isovalerate. In the isomerase reaction, S2AL is rearranged via a Mg-dependent methyl migration to produce 3-hydroxy-3-methyl-2-ketobutyrate (HMKB). In the reductase reaction, this 2-ketoacid undergoes a metal-dependent reduction by NADPH to yield (R)-2,3-dihydroxy-isovalerate. This chain is Ketol-acid reductoisomerase (NADP(+)), found in Pseudomonas putida (strain W619).